Reading from the N-terminus, the 209-residue chain is uncharacterized protein (209 aa).

This is an uncharacterized protein from Klebsiella pneumoniae.